Here is a 424-residue protein sequence, read N- to C-terminus: Histidine--tRNA ligase (424 aa).

This sequence belongs to the class-II aminoacyl-tRNA synthetase family. Homodimer.

It localises to the cytoplasm. It catalyses the reaction tRNA(His) + L-histidine + ATP = L-histidyl-tRNA(His) + AMP + diphosphate + H(+). This Bacillus licheniformis (strain ATCC 14580 / DSM 13 / JCM 2505 / CCUG 7422 / NBRC 12200 / NCIMB 9375 / NCTC 10341 / NRRL NRS-1264 / Gibson 46) protein is Histidine--tRNA ligase.